The chain runs to 92 residues: MNKQELIDAVAAQTGASKAQTGETLDTLLEVIKKAVSKGDSVQLIGFGSFGSGKRAARTGRNPKTGETIKIPAAKTVKFTAGKAFKDAVNKR.

It belongs to the bacterial histone-like protein family. Heterodimer of an alpha and a beta chain.

Functionally, histone-like DNA-binding protein which is capable of wrapping DNA to stabilize it, and thus to prevent its denaturation under extreme environmental conditions. This chain is DNA-binding protein HU-alpha (hupA), found in Burkholderia pseudomallei (strain K96243).